The following is a 493-amino-acid chain: Cytochrome P450 2E1 (493 aa).

298 to 303 is a binding site for substrate; sequence FAGTET. Cys-437 serves as a coordination point for heme.

The protein belongs to the cytochrome P450 family. In terms of assembly, interacts with chaperones HSP70 and HSP90; this interaction is required for initial targeting to mitochondria. The cofactor is heme.

The protein localises to the endoplasmic reticulum membrane. It is found in the microsome membrane. Its subcellular location is the mitochondrion inner membrane. The catalysed reaction is an organic molecule + reduced [NADPH--hemoprotein reductase] + O2 = an alcohol + oxidized [NADPH--hemoprotein reductase] + H2O + H(+). It catalyses the reaction (5Z,8Z,11Z)-eicosatrienoate + reduced [NADPH--hemoprotein reductase] + O2 = 19-hydroxy-(5Z,8Z,11Z)-eicosatrienoate + oxidized [NADPH--hemoprotein reductase] + H2O + H(+). It carries out the reaction (5Z,8Z,11Z,14Z,17Z)-eicosapentaenoate + reduced [NADPH--hemoprotein reductase] + O2 = 19-hydroxy-(5Z,8Z,11Z,14Z,17Z)-eicosapentaenoate + oxidized [NADPH--hemoprotein reductase] + H2O + H(+). The enzyme catalyses (4Z,7Z,10Z,13Z,16Z,19Z)-docosahexaenoate + reduced [NADPH--hemoprotein reductase] + O2 = 21-hydroxy-(4Z,7Z,10Z,13Z,16Z,19Z)-docosahexaenoate + oxidized [NADPH--hemoprotein reductase] + H2O + H(+). The catalysed reaction is dodecanoate + reduced [NADPH--hemoprotein reductase] + O2 = 11-hydroxydodecanoate + oxidized [NADPH--hemoprotein reductase] + H2O + H(+). It catalyses the reaction tetradecanoate + reduced [NADPH--hemoprotein reductase] + O2 = 13-hydroxytetradecanoate + oxidized [NADPH--hemoprotein reductase] + H2O + H(+). It carries out the reaction 4-nitrophenol + NADPH + O2 + H(+) = 4-nitrocatechol + NADP(+) + H2O. The protein operates within lipid metabolism; fatty acid metabolism. Its activity is regulated as follows. The omega-1 hydroxylase activity is stimulated by cytochrome b5. In terms of biological role, a cytochrome P450 monooxygenase involved in the metabolism of fatty acids. Mechanistically, uses molecular oxygen inserting one oxygen atom into a substrate, and reducing the second into a water molecule, with two electrons provided by NADPH via cytochrome P450 reductase (NADPH--hemoprotein reductase). Catalyzes the hydroxylation of carbon-hydrogen bonds. Hydroxylates fatty acids specifically at the omega-1 position displaying the highest catalytic activity for saturated fatty acids. May be involved in the oxidative metabolism of xenobiotics. The protein is Cytochrome P450 2E1 (CYP2E1) of Macaca mulatta (Rhesus macaque).